The following is a 612-amino-acid chain: Elongation factor 4 (612 aa).

The region spanning K11–T193 is the tr-type G domain. Residues D23–T28 and N140–D143 contribute to the GTP site.

This sequence belongs to the TRAFAC class translation factor GTPase superfamily. Classic translation factor GTPase family. LepA subfamily.

Its subcellular location is the cell membrane. It carries out the reaction GTP + H2O = GDP + phosphate + H(+). Its function is as follows. Required for accurate and efficient protein synthesis under certain stress conditions. May act as a fidelity factor of the translation reaction, by catalyzing a one-codon backward translocation of tRNAs on improperly translocated ribosomes. Back-translocation proceeds from a post-translocation (POST) complex to a pre-translocation (PRE) complex, thus giving elongation factor G a second chance to translocate the tRNAs correctly. Binds to ribosomes in a GTP-dependent manner. This Lactobacillus delbrueckii subsp. bulgaricus (strain ATCC 11842 / DSM 20081 / BCRC 10696 / JCM 1002 / NBRC 13953 / NCIMB 11778 / NCTC 12712 / WDCM 00102 / Lb 14) protein is Elongation factor 4.